Consider the following 134-residue polypeptide: DNA-binding protein inhibitor ID-2 (134 aa).

A phosphoserine mark is found at S14 and S25. The region spanning 23-75 (SRSKTPVDDPMSLLYNMNDCYSKLKELVPSIPQNKKVSKMEILQHVIDYILDL) is the bHLH domain. Residues 106-115 (LNTDISILSL) carry the Nuclear export signal motif.

As to quaternary structure, interacts with GATA4 and NKX2-5. Interacts with NR0B2. Interacts with CLOCK and BMAL1. Interacts with IFI204. Interacts with NEDD9/HEF1. Interacts with ASB4; this interaction promotes ID2 proteasomal degradation. Post-translationally, ubiquitinated in a ASB4-depedent manner, leading to proteasomal degradation. Phosphorylated in vitro by CDK1, PKA and PKC.

It localises to the cytoplasm. It is found in the nucleus. Functionally, transcriptional regulator (lacking a basic DNA binding domain) which negatively regulates the basic helix-loop-helix (bHLH) transcription factors by forming heterodimers and inhibiting their DNA binding and transcriptional activity. Implicated in regulating a variety of cellular processes, including cellular growth, senescence, differentiation, apoptosis, angiogenesis, and neoplastic transformation. Inhibits skeletal muscle and cardiac myocyte differentiation. Regulates the circadian clock by repressing the transcriptional activator activity of the CLOCK-BMAL1 heterodimer. Restricts the CLOCK and BMAL1 localization to the cytoplasm. Plays a role in both the input and output pathways of the circadian clock: in the input component, is involved in modulating the magnitude of photic entrainment and in the output component, contributes to the regulation of a variety of liver clock-controlled genes involved in lipid metabolism. The protein is DNA-binding protein inhibitor ID-2 (ID2) of Sus scrofa (Pig).